The primary structure comprises 141 residues: Small ribosomal subunit protein bS6 (141 aa).

The segment at 96-141 (VTGPSAMMKTVEREEFRKASQAGNQTTAPAASPADHAAAPASADRS) is disordered. Residues 123-141 (APAASPADHAAAPASADRS) show a composition bias toward low complexity.

This sequence belongs to the bacterial ribosomal protein bS6 family.

In terms of biological role, binds together with bS18 to 16S ribosomal RNA. The sequence is that of Small ribosomal subunit protein bS6 from Verminephrobacter eiseniae (strain EF01-2).